Consider the following 124-residue polypeptide: TP53-target gene 3 protein (124 aa).

Residues 1 to 11 show a composition bias toward polar residues; sequence MRASPCISQPA. A disordered region spans residues 1–42; the sequence is MRASPCISQPAASWHPRPSALRPTAGSGPDTRTPGTVEDGSA.

Strongly expressed in testis. Weakly expressed in heart, placenta and skeletal muscle.

It is found in the cytoplasm. The protein resides in the nucleus. Its function is as follows. May play a significant role in p53/TP53-mediating signaling pathway. The chain is TP53-target gene 3 protein from Homo sapiens (Human).